The chain runs to 334 residues: Anthranilate phosphoribosyltransferase (334 aa).

Residues Gly-79, 82-83 (GD), Ser-87, 89-92 (NIST), 107-115 (KHGNRSISS), and Ser-119 each bind 5-phospho-alpha-D-ribose 1-diphosphate. Position 79 (Gly-79) interacts with anthranilate. Ser-91 is a binding site for Mg(2+). Position 110 (Asn-110) interacts with anthranilate. Arg-165 serves as a coordination point for anthranilate. Asp-224 and Glu-225 together coordinate Mg(2+).

It belongs to the anthranilate phosphoribosyltransferase family. Homodimer. Mg(2+) is required as a cofactor.

The enzyme catalyses N-(5-phospho-beta-D-ribosyl)anthranilate + diphosphate = 5-phospho-alpha-D-ribose 1-diphosphate + anthranilate. The protein operates within amino-acid biosynthesis; L-tryptophan biosynthesis; L-tryptophan from chorismate: step 2/5. Catalyzes the transfer of the phosphoribosyl group of 5-phosphorylribose-1-pyrophosphate (PRPP) to anthranilate to yield N-(5'-phosphoribosyl)-anthranilate (PRA). This Streptococcus pneumoniae serotype 19F (strain G54) protein is Anthranilate phosphoribosyltransferase.